The primary structure comprises 396 residues: Ornithine aminotransferase 2 (396 aa).

N6-(pyridoxal phosphate)lysine is present on Lys-255.

The protein belongs to the class-III pyridoxal-phosphate-dependent aminotransferase family. OAT subfamily. Pyridoxal 5'-phosphate is required as a cofactor.

It localises to the cytoplasm. The catalysed reaction is a 2-oxocarboxylate + L-ornithine = L-glutamate 5-semialdehyde + an L-alpha-amino acid. It functions in the pathway amino-acid biosynthesis; L-proline biosynthesis; L-glutamate 5-semialdehyde from L-ornithine: step 1/1. In terms of biological role, catalyzes the interconversion of ornithine to glutamate semialdehyde. The polypeptide is Ornithine aminotransferase 2 (Staphylococcus aureus (strain MRSA252)).